A 513-amino-acid polypeptide reads, in one-letter code: Ribonuclease Y (513 aa).

The chain crosses the membrane as a helical span at residues 4–24 (TTSLIIAILAGILGIVIGFFF). A disordered region spans residues 78–106 (KSRLKEISRQEDRLNSKEENLERKNASLE). The KH domain occupies 203–288 (TVSVVNLPND…EMVEKARKDV (86 aa)). The HD domain maps to 329 to 422 (VLKHSIEVSN…VQSADAISAA (94 aa)).

Belongs to the RNase Y family.

The protein resides in the cell membrane. In terms of biological role, endoribonuclease that initiates mRNA decay. This is Ribonuclease Y from Finegoldia magna (strain ATCC 29328 / DSM 20472 / WAL 2508) (Peptostreptococcus magnus).